Reading from the N-terminus, the 282-residue chain is Epoxide hydrolase LasB (282 aa).

The tract at residues 1 to 133 is lsd19A; it reads MPAETVRKEV…TDSSWTARPA (133 aa). Tyrosine 14 is a binding site for substrate. Aspartate 38 functions as the Proton acceptor; for 5-exo epoxide-opening cyclization activity in the catalytic mechanism. Residues glutamate 65 and histidine 146 each coordinate substrate. The interval 134–282 is lsd19B; the sequence is PDEERRKELA…TDVSLLDPAA (149 aa). Residue aspartate 170 is the Proton acceptor; for 6-endo epoxide-opening cyclization activity of the active site. 3 residues coordinate substrate: arginine 177, glutamate 197, and tyrosine 251.

Functionally, epoxide hydrolase responsible for the double epoxide-opening cyclization of bisepoxyprelasalocid A to form lasalocid A, a polyether antibiotic. In vitro, accepts various substrate analogs differing in the left segment of lasalocid and epoxide stereochemistry to afford products with excellent regioselectivity. In Streptomyces lasalocidi (Streptomyces lasaliensis), this protein is Epoxide hydrolase LasB (lsd19).